The sequence spans 330 residues: Phosphate acyltransferase (330 aa).

The protein belongs to the PlsX family. As to quaternary structure, homodimer. Probably interacts with PlsY.

It localises to the cytoplasm. The catalysed reaction is a fatty acyl-[ACP] + phosphate = an acyl phosphate + holo-[ACP]. The protein operates within lipid metabolism; phospholipid metabolism. In terms of biological role, catalyzes the reversible formation of acyl-phosphate (acyl-PO(4)) from acyl-[acyl-carrier-protein] (acyl-ACP). This enzyme utilizes acyl-ACP as fatty acyl donor, but not acyl-CoA. This chain is Phosphate acyltransferase, found in Bacillus thuringiensis (strain Al Hakam).